We begin with the raw amino-acid sequence, 458 residues long: ATP synthase subunit beta (458 aa).

ATP is bound at residue 148–155; that stretch reads GGAGVGKT.

It belongs to the ATPase alpha/beta chains family. F-type ATPases have 2 components, CF(1) - the catalytic core - and CF(0) - the membrane proton channel. CF(1) has five subunits: alpha(3), beta(3), gamma(1), delta(1), epsilon(1). CF(0) has three main subunits: a(1), b(2) and c(9-12). The alpha and beta chains form an alternating ring which encloses part of the gamma chain. CF(1) is attached to CF(0) by a central stalk formed by the gamma and epsilon chains, while a peripheral stalk is formed by the delta and b chains.

The protein resides in the cell inner membrane. The enzyme catalyses ATP + H2O + 4 H(+)(in) = ADP + phosphate + 5 H(+)(out). Functionally, produces ATP from ADP in the presence of a proton gradient across the membrane. The catalytic sites are hosted primarily by the beta subunits. This chain is ATP synthase subunit beta, found in Shewanella halifaxensis (strain HAW-EB4).